A 181-amino-acid polypeptide reads, in one-letter code: Translation initiation factor IF-3 (181 aa).

It belongs to the IF-3 family. In terms of assembly, monomer.

The protein resides in the cytoplasm. IF-3 binds to the 30S ribosomal subunit and shifts the equilibrium between 70S ribosomes and their 50S and 30S subunits in favor of the free subunits, thus enhancing the availability of 30S subunits on which protein synthesis initiation begins. This chain is Translation initiation factor IF-3, found in Idiomarina loihiensis (strain ATCC BAA-735 / DSM 15497 / L2-TR).